The sequence spans 456 residues: MNYPAEPFRIKSVETVSMIPRDERLKKMQEAGYNTFLLNSKDIYIDLLTDSGTNAMSDKQWAGMMMGDEAYAGSENFYHLERTVQELFGFKHIVPTHQGRGAENLLSQLAIKPGQYVAGNMYFTTTRYHQEKNGAVFVDIVRDEAHDAGLNIAFKGDIDLKKLQKLIDEKGAENIAYICLAVTVNLAGGQPVSMANMRAVRELTEAHGIKVFYDATRCVENAYFIKEQEQGFENKSIAEIVHEMFSYADGCTMSGKKDCLVNIGGFLCMNDDEMFSSAKELVVVYEGMPSYGGLAGRDMEAMAIGLREAMQYEYIEHRVKQVRYLGDKLKAAGVPIVEPVGGHAVFLDARRFCEHLTQDEFPAQSLAASIYVETGVRSMERGIISAGRNNVTGEHHRPKLETVRLTIPRRVYTYAHMDVVADGIIKLYQHKEDIRGLKFIYEPKQLRFFTARFDYI.

Residue lysine 257 is modified to N6-(pyridoxal phosphate)lysine.

Belongs to the beta-eliminating lyase family. Homotetramer. Pyridoxal 5'-phosphate is required as a cofactor.

It catalyses the reaction L-tyrosine + H2O = phenol + pyruvate + NH4(+). In Citrobacter freundii, this protein is Tyrosine phenol-lyase (tpl).